A 292-amino-acid chain; its full sequence is Malonyl-S-ACP:biotin-protein carboxyltransferase MADD (292 aa).

The CoA carboxyltransferase C-terminal domain maps to 1–281; that stretch reads MEIMMGQGRL…RGKVMAMMDK (281 aa).

Its subcellular location is the cytoplasm. The enzyme catalyses N(6)-biotinyl-L-lysyl-[protein] + malonyl-[ACP] = N(6)-carboxybiotinyl-L-lysyl-[protein] + acetyl-[ACP]. Functionally, gamma subunit of the biotin-dependent malonate decarboxylase multienzyme complex (EC 7.2.4.4). The two subunits MADC and MADD are required for the transfer of the malonate carboxy group from the acyl-carrier protein (ACP) to the prosthetic group of the biotin carrier MADF. Required for the regeneration of ACP. This is Malonyl-S-ACP:biotin-protein carboxyltransferase MADD (madD) from Malonomonas rubra.